The chain runs to 164 residues: ATP synthase subunit b (164 aa).

Residues 12–32 (FILVTGSVIVLLLLIKAFAWG) form a helical membrane-spanning segment.

It belongs to the ATPase B chain family. As to quaternary structure, F-type ATPases have 2 components, F(1) - the catalytic core - and F(0) - the membrane proton channel. F(1) has five subunits: alpha(3), beta(3), gamma(1), delta(1), epsilon(1). F(0) has three main subunits: a(1), b(2) and c(10-14). The alpha and beta chains form an alternating ring which encloses part of the gamma chain. F(1) is attached to F(0) by a central stalk formed by the gamma and epsilon chains, while a peripheral stalk is formed by the delta and b chains.

The protein localises to the cell membrane. In terms of biological role, f(1)F(0) ATP synthase produces ATP from ADP in the presence of a proton or sodium gradient. F-type ATPases consist of two structural domains, F(1) containing the extramembraneous catalytic core and F(0) containing the membrane proton channel, linked together by a central stalk and a peripheral stalk. During catalysis, ATP synthesis in the catalytic domain of F(1) is coupled via a rotary mechanism of the central stalk subunits to proton translocation. Its function is as follows. Component of the F(0) channel, it forms part of the peripheral stalk, linking F(1) to F(0). The sequence is that of ATP synthase subunit b from Streptococcus equi subsp. zooepidemicus (strain MGCS10565).